Consider the following 491-residue polypeptide: MSKLRFFQSLLISTVICFFLPSINARGGHSDHIHPGDGNYSFHGIVRHLFAQEEPTPSLELTRGYMTNDDLEKAMKDFTKRCSKISRLYSIGKSVNGFPLWVIEISDRPGEIEAEPAFKYIGNVHGDEPVGRELLLRLANWICDNYKKDPLAQMIVENVHLHIMPSLNPDGFSIRKRNNANNVDLNRDFPDQFFPFNDDLNLRQPETKAIMTWLRDIRFTASATLHGGALVANFPWDGTEDKRKYYYACPDDETFRFLARIYSKSHRNMSLSKEFEEGITNGASWYPIYGGMQDWNYIYGGCFELTLEISDNKWPKASELSTIWDYNRKSMLNLVASLVKTGVHGRIFSLDKGKPLPGLVVVKGINYTVKAHQTYADYHRLLVPGQKYEVTASSPGYKSKTTTVWLGENAVTADFILIPETSSRGNQLRSSCDCSCKSCGQPLLTQFFTETNNGITLTLFVVVVFLCFLLQRRVRFNLWKQRQSSRRSITV.

An N-terminal signal peptide occupies residues Met1–Ala25. Topologically, residues Arg26 to Asn452 are extracellular. An N-linked (GlcNAc...) asparagine glycan is attached at Asn39. A Peptidase M14 domain is found at Gly64 to Leu338. His125 and Glu128 together coordinate Zn(2+). Substrate is bound by residues His125–Glu128 and Asn186–Arg187. His226 provides a ligand contact to Zn(2+). A glycan (N-linked (GlcNAc...) asparagine) is linked at Asn268. Tyr286 contacts substrate. Residue Glu308 is the Proton donor/acceptor of the active site. Residues Asn453–Leu470 traverse the membrane as a helical segment. Over Gln471–Val491 the chain is Cytoplasmic.

This sequence belongs to the peptidase M14 family. Zn(2+) serves as cofactor. In terms of tissue distribution, expressed in roots, shoots, leaves, flowers and siliques.

It localises to the endosome membrane. Possesses in vitro carboxypeptidase activity against the C-terminal arginine and lysine residues. Involved in the maturation of CLE19. Removes the C-terminal arginine residue of CLE19 proprotein. The cleavage of the C-terminal arginine residue is necessary for CLE19 activity in vivo. Is not involved in generating active CLV3. Is not involved in CLE19 or CLV3 perception. The polypeptide is Carboxypeptidase SOL1 (Arabidopsis thaliana (Mouse-ear cress)).